Reading from the N-terminus, the 77-residue chain is Large ribosomal subunit protein bL28 (77 aa).

This sequence belongs to the bacterial ribosomal protein bL28 family.

The sequence is that of Large ribosomal subunit protein bL28 from Cupriavidus necator (strain ATCC 17699 / DSM 428 / KCTC 22496 / NCIMB 10442 / H16 / Stanier 337) (Ralstonia eutropha).